Reading from the N-terminus, the 376-residue chain is MNSRIPEDLIERAHRGKTTKEDALLLLEVPPFELFRFADELRDLAAGDTVTYVVNRNINFTSRCTGSCGFCAFRTDDGKVLSIEEIMEKVREAEKANATEVCIQGGLLPDVGLDFYQGIVEAIKAEFPEMHVHSFSPMEVYHASRISEIPVKESLRRLKRSGLDTMPGTAAEILSDRVRKIICPAKLNTAEWIEVVTQAHAAGIPTTATMMYGHVETPEERINHMLTIREIQKETGGITEFVPLPFMPYNNPVGEKMIKEGRYATPGLEDLKVYAVSRILFHGHVDNIQASWVKLGKKFAQFSLHCGVNDLGGTLMEESISRSAGACHGEMITVDELEWMIHGAGRIPKERTTLYREAHELASRNSRKIAGCGAFE.

The 226-residue stretch at 50–275 (VTYVVNRNIN…PGLEDLKVYA (226 aa)) folds into the Radical SAM core domain. The [4Fe-4S] cluster site is built by Cys-64, Cys-68, and Cys-71.

The protein belongs to the radical SAM superfamily. CofH family. In terms of assembly, consists of two subunits, CofG and CofH. It depends on [4Fe-4S] cluster as a cofactor.

The enzyme catalyses 5-amino-6-(D-ribitylamino)uracil + L-tyrosine + S-adenosyl-L-methionine = 5-amino-5-(4-hydroxybenzyl)-6-(D-ribitylimino)-5,6-dihydrouracil + 2-iminoacetate + 5'-deoxyadenosine + L-methionine + H(+). Its pathway is cofactor biosynthesis; coenzyme F0 biosynthesis. Catalyzes the radical-mediated synthesis of 5-amino-5-(4-hydroxybenzyl)-6-(D-ribitylimino)-5,6-dihydrouracil from 5-amino-6-(D-ribitylamino)uracil and L-tyrosine. In Methanosarcina mazei (strain ATCC BAA-159 / DSM 3647 / Goe1 / Go1 / JCM 11833 / OCM 88) (Methanosarcina frisia), this protein is 5-amino-6-(D-ribitylamino)uracil--L-tyrosine 4-hydroxyphenyl transferase 1.